The chain runs to 358 residues: Bi-functional coumaroyl CoA and feruloyl CoA ortho-hydroxylase F6H2-2-1 (358 aa).

The region spanning 200 to 308 (SKESLLMGSR…RISVPVFVNP (109 aa)) is the Fe2OG dioxygenase domain. 2-oxoglutarate is bound at residue tyrosine 216. 3 residues coordinate Fe cation: histidine 231, aspartate 233, and histidine 289. The 2-oxoglutarate site is built by arginine 299 and serine 301.

Belongs to the iron/ascorbate-dependent oxidoreductase family. L-ascorbate serves as cofactor. The cofactor is Fe(2+). As to expression, mostly expressed in underground stems and stems.

The enzyme catalyses (E)-4-coumaroyl-CoA + 2-oxoglutarate + O2 = (E)-2,4-dihydroxycinnamoyl-CoA + succinate + CO2. The catalysed reaction is (E)-feruloyl-CoA + 2-oxoglutarate + O2 = (E)-6-hydroxyferuloyl-CoA + succinate + CO2. It functions in the pathway phenylpropanoid metabolism. 2-oxoglutarate (OG)- and Fe(II)-dependent dioxygenase (2OGD) involved in scopoletin and umbelliferone biosynthesis. Converts feruloyl CoA into 6'-hydroxyferuloyl CoA, and p-coumaroyl CoA into 2,4-dihydroxycinnamoyl-CoA, but has no activity toward caffeoyl-CoA. In Ipomoea batatas (Sweet potato), this protein is Bi-functional coumaroyl CoA and feruloyl CoA ortho-hydroxylase F6H2-2-1.